The following is a 264-amino-acid chain: 3-methyl-2-oxobutanoate hydroxymethyltransferase (264 aa).

Mg(2+)-binding residues include Asp45 and Asp84. 3-methyl-2-oxobutanoate contacts are provided by residues 45 to 46 (DS), Asp84, and Lys112. Mg(2+) is bound at residue Glu114. Glu181 serves as the catalytic Proton acceptor.

This sequence belongs to the PanB family. As to quaternary structure, homodecamer; pentamer of dimers. Requires Mg(2+) as cofactor.

Its subcellular location is the cytoplasm. It catalyses the reaction 3-methyl-2-oxobutanoate + (6R)-5,10-methylene-5,6,7,8-tetrahydrofolate + H2O = 2-dehydropantoate + (6S)-5,6,7,8-tetrahydrofolate. It functions in the pathway cofactor biosynthesis; (R)-pantothenate biosynthesis; (R)-pantoate from 3-methyl-2-oxobutanoate: step 1/2. In terms of biological role, catalyzes the reversible reaction in which hydroxymethyl group from 5,10-methylenetetrahydrofolate is transferred onto alpha-ketoisovalerate to form ketopantoate. In Shigella boydii serotype 18 (strain CDC 3083-94 / BS512), this protein is 3-methyl-2-oxobutanoate hydroxymethyltransferase.